Reading from the N-terminus, the 105-residue chain is Large ribosomal subunit protein uL24 (105 aa).

The protein belongs to the universal ribosomal protein uL24 family. In terms of assembly, part of the 50S ribosomal subunit.

Functionally, one of two assembly initiator proteins, it binds directly to the 5'-end of the 23S rRNA, where it nucleates assembly of the 50S subunit. Its function is as follows. One of the proteins that surrounds the polypeptide exit tunnel on the outside of the subunit. This chain is Large ribosomal subunit protein uL24, found in Pseudothermotoga lettingae (strain ATCC BAA-301 / DSM 14385 / NBRC 107922 / TMO) (Thermotoga lettingae).